A 308-amino-acid chain; its full sequence is Shikimate kinase 1, chloroplastic (308 aa).

Residues 1–62 (MEAGVGLALQ…RGSKPVAPLR (62 aa)) constitute a chloroplast transit peptide. 103–110 (GMMGSGKS) serves as a coordination point for ATP. S110 contacts Mg(2+). Positions 128, 153, and 175 each coordinate substrate. Residue R214 participates in ATP binding.

The protein belongs to the shikimate kinase family. It depends on Mg(2+) as a cofactor. As to expression, expressed in panicles.

The protein localises to the plastid. It is found in the chloroplast. The enzyme catalyses shikimate + ATP = 3-phosphoshikimate + ADP + H(+). Its pathway is metabolic intermediate biosynthesis; chorismate biosynthesis; chorismate from D-erythrose 4-phosphate and phosphoenolpyruvate: step 5/7. In terms of biological role, catalyzes the specific phosphorylation of the 3-hydroxyl group of shikimic acid using ATP as a cosubstrate. This is Shikimate kinase 1, chloroplastic (SK1) from Oryza sativa subsp. japonica (Rice).